The sequence spans 453 residues: tRNA-2-methylthio-N(6)-dimethylallyladenosine synthase (453 aa).

In terms of domain architecture, MTTase N-terminal spans 21-137; sequence RGVYISTYGC…LPQLVAKSFA (117 aa). [4Fe-4S] cluster-binding residues include C30, C66, C100, C174, C178, and C181. Residues 160-389 enclose the Radical SAM core domain; sequence RNPGVATYVN…FDVHEAMAFE (230 aa). The 62-residue stretch at 392–453 folds into the TRAM domain; it reads KRYEGTTMKV…FPAVFRGEMI (62 aa).

This sequence belongs to the methylthiotransferase family. MiaB subfamily. As to quaternary structure, monomer. The cofactor is [4Fe-4S] cluster.

It localises to the cytoplasm. The catalysed reaction is N(6)-dimethylallyladenosine(37) in tRNA + (sulfur carrier)-SH + AH2 + 2 S-adenosyl-L-methionine = 2-methylsulfanyl-N(6)-dimethylallyladenosine(37) in tRNA + (sulfur carrier)-H + 5'-deoxyadenosine + L-methionine + A + S-adenosyl-L-homocysteine + 2 H(+). Functionally, catalyzes the methylthiolation of N6-(dimethylallyl)adenosine (i(6)A), leading to the formation of 2-methylthio-N6-(dimethylallyl)adenosine (ms(2)i(6)A) at position 37 in tRNAs that read codons beginning with uridine. The sequence is that of tRNA-2-methylthio-N(6)-dimethylallyladenosine synthase from Bdellovibrio bacteriovorus (strain ATCC 15356 / DSM 50701 / NCIMB 9529 / HD100).